Here is a 187-residue protein sequence, read N- to C-terminus: Intermembrane transport lipoprotein PqiC (187 aa).

A signal peptide spans M1–G15. The N-palmitoyl cysteine moiety is linked to residue C16. Residue C16 is the site of S-diacylglycerol cysteine attachment.

As to quaternary structure, may form a complex composed of PqiA, PqiB and PqiC. Interacts with PqiB.

It localises to the cell outer membrane. Component of a transport pathway that contributes to membrane integrity. The sequence is that of Intermembrane transport lipoprotein PqiC from Escherichia coli (strain K12).